The primary structure comprises 101 residues: Thioredoxin 1 (101 aa).

In terms of domain architecture, Thioredoxin spans 2 to 101; that stretch reads AQTLDDLIRT…MRQEVLKAIG (100 aa). C25 and C28 form a disulfide bridge.

It belongs to the thioredoxin family.

Participates in various redox reactions through the reversible oxidation of its active center dithiol to a disulfide and catalyzes dithiol-disulfide exchange reactions. This chain is Thioredoxin 1 (trx1), found in Chlorobaculum tepidum (strain ATCC 49652 / DSM 12025 / NBRC 103806 / TLS) (Chlorobium tepidum).